The chain runs to 963 residues: Non-ribosomal peptide synthetase CmlP (963 aa).

The Carrier domain occupies 492 to 568 (GEDAAELRRV…AAFLRHLRGE (77 aa)). Position 526 is an O-(pantetheine 4'-phosphoryl)serine (serine 526). The interval 928–963 (GRLLGTPPDTPAGDRPERTGTTAEAQNGAAHAPTPR) is disordered.

This sequence belongs to the ATP-dependent AMP-binding enzyme family. The cofactor is pantetheine 4'-phosphate.

The enzyme catalyses 4-amino-L-phenylalanine + holo-[peptidyl-carrier protein] + ATP = 4-amino-L-phenylalanyl-[peptidyl-carrier protein] + AMP + diphosphate. The protein operates within antibiotic biosynthesis. Its function is as follows. Involved in chloramphenicol biosynthesis. Activates 4-amino-L-phenylalanine by adenylation and loads it onto its peptidyl carrier domain, via a thioester linkage to the phosphopanthetheine moiety. Can also adenylate tyrosine and phenylalanine at low rates, but not L-p-nitrophenylalanine or threo-phenylserine. The chain is Non-ribosomal peptide synthetase CmlP from Streptomyces venezuelae (strain ATCC 10712 / CBS 650.69 / DSM 40230 / JCM 4526 / NBRC 13096 / PD 04745).